A 452-amino-acid chain; its full sequence is Eukaryotic translation initiation factor 3 subunit E (452 aa).

Positions threonine 257–glutamine 426 constitute a PCI domain.

This sequence belongs to the eIF-3 subunit E family. Component of the eukaryotic translation initiation factor 3 (eIF-3) complex.

It localises to the cytoplasm. Functionally, component of the eukaryotic translation initiation factor 3 (eIF-3) complex, which is involved in protein synthesis of a specialized repertoire of mRNAs and, together with other initiation factors, stimulates binding of mRNA and methionyl-tRNAi to the 40S ribosome. The eIF-3 complex specifically targets and initiates translation of a subset of mRNAs involved in cell proliferation. This Aspergillus niger (strain ATCC MYA-4892 / CBS 513.88 / FGSC A1513) protein is Eukaryotic translation initiation factor 3 subunit E (int6).